Consider the following 156-residue polypeptide: Transcription antitermination protein NusB (156 aa).

The protein belongs to the NusB family.

Involved in transcription antitermination. Required for transcription of ribosomal RNA (rRNA) genes. Binds specifically to the boxA antiterminator sequence of the ribosomal RNA (rrn) operons. The polypeptide is Transcription antitermination protein NusB (Clostridium kluyveri (strain ATCC 8527 / DSM 555 / NBRC 12016 / NCIMB 10680 / K1)).